Here is a 608-residue protein sequence, read N- to C-terminus: Protein UL27 (608 aa).

A compositionally biased stretch (pro residues) spans 1 to 13 (MNPVDQPPPPLPT). The segment at 1–33 (MNPVDQPPPPLPTQQPEEQAKEDHDDGDERLFR) is disordered. The segment covering 18-33 (EQAKEDHDDGDERLFR) has biased composition (basic and acidic residues).

This sequence belongs to the herpesviridae U4 family. As to quaternary structure, interacts with host KAT5, PSME3 and EP400.

The protein localises to the host nucleus. The protein resides in the host nucleolus. In terms of biological role, promotes a cell cycle arrest in G0/G1 by inducing the proteasomal degradation of host histone acetyltransferase KAT5/Tip60. The sequence is that of Protein UL27 (UL27) from Human cytomegalovirus (strain AD169) (HHV-5).